The chain runs to 314 residues: Dihydropteroate synthase (314 aa).

The Pterin-binding domain maps to 10–294; the sequence is TVICGIINVT…DVASHRMAVE (285 aa). Asparagine 17 contacts Mg(2+). (7,8-dihydropterin-6-yl)methyl diphosphate contacts are provided by residues threonine 57, aspartate 91, asparagine 110, aspartate 201, lysine 237, and 282–284; that span reads RVH.

The protein belongs to the DHPS family. In terms of assembly, homodimer or homotrimer. The cofactor is Mg(2+).

It catalyses the reaction (7,8-dihydropterin-6-yl)methyl diphosphate + 4-aminobenzoate = 7,8-dihydropteroate + diphosphate. It participates in cofactor biosynthesis; tetrahydrofolate biosynthesis; 7,8-dihydrofolate from 2-amino-4-hydroxy-6-hydroxymethyl-7,8-dihydropteridine diphosphate and 4-aminobenzoate: step 1/2. In terms of biological role, catalyzes the condensation of para-aminobenzoate (pABA) with 6-hydroxymethyl-7,8-dihydropterin diphosphate (DHPt-PP) to form 7,8-dihydropteroate (H2Pte), the immediate precursor of folate derivatives. The chain is Dihydropteroate synthase (sulA) from Streptococcus pneumoniae serotype 4 (strain ATCC BAA-334 / TIGR4).